Here is a 237-residue protein sequence, read N- to C-terminus: Urease accessory protein UreF (237 aa).

This sequence belongs to the UreF family. In terms of assembly, ureD, UreF and UreG form a complex that acts as a GTP-hydrolysis-dependent molecular chaperone, activating the urease apoprotein by helping to assemble the nickel containing metallocenter of UreC. The UreE protein probably delivers the nickel.

Its subcellular location is the cytoplasm. In terms of biological role, required for maturation of urease via the functional incorporation of the urease nickel metallocenter. This is Urease accessory protein UreF from Streptococcus thermophilus (strain ATCC BAA-250 / LMG 18311).